The following is a 301-amino-acid chain: Dihydroorotate dehydrogenase B (NAD(+)), catalytic subunit (301 aa).

Substrate is bound by residues K44, 68–72 (NAMGL), and N122. 44-45 (KS) provides a ligand contact to FMN. N122 contributes to the FMN binding site. C125 acts as the Nucleophile in catalysis. FMN contacts are provided by K160 and I186. Residue 187–188 (NT) coordinates substrate. FMN-binding positions include G212, 238–239 (GG), and 260–261 (GS).

The protein belongs to the dihydroorotate dehydrogenase family. Type 1 subfamily. Heterotetramer of 2 PyrK and 2 PyrD type B subunits. FMN is required as a cofactor.

The protein localises to the cytoplasm. It catalyses the reaction (S)-dihydroorotate + NAD(+) = orotate + NADH + H(+). The protein operates within pyrimidine metabolism; UMP biosynthesis via de novo pathway; orotate from (S)-dihydroorotate (NAD(+) route): step 1/1. In terms of biological role, catalyzes the conversion of dihydroorotate to orotate with NAD(+) as electron acceptor. This chain is Dihydroorotate dehydrogenase B (NAD(+)), catalytic subunit (pyrD), found in Methanocella arvoryzae (strain DSM 22066 / NBRC 105507 / MRE50).